We begin with the raw amino-acid sequence, 332 residues long: Putative ankyrin repeat protein R896 (332 aa).

ANK repeat units lie at residues 159-188 (GNDN…NVKS), 190-218 (DNCA…NVKA), 219-248 (DGNY…DIKA), 249-278 (AQNL…NIST), and 280-308 (NDYV…DIFS).

The polypeptide is Putative ankyrin repeat protein R896 (Acanthamoeba polyphaga mimivirus (APMV)).